Here is a 117-residue protein sequence, read N- to C-terminus: Large ribosomal subunit protein bL19 (117 aa).

This sequence belongs to the bacterial ribosomal protein bL19 family.

In terms of biological role, this protein is located at the 30S-50S ribosomal subunit interface and may play a role in the structure and function of the aminoacyl-tRNA binding site. This chain is Large ribosomal subunit protein bL19, found in Blochmanniella floridana.